We begin with the raw amino-acid sequence, 420 residues long: LanC-like protein 3 homolog (420 aa).

The protein belongs to the LanC-like protein family.

In Drosophila pseudoobscura pseudoobscura (Fruit fly), this protein is LanC-like protein 3 homolog.